The sequence spans 184 residues: Pyridoxal 5'-phosphate synthase subunit PdxT (184 aa).

46 to 48 (GES) lines the L-glutamine pocket. The active-site Nucleophile is cysteine 75. L-glutamine is bound by residues arginine 101 and 129 to 130 (IR). Catalysis depends on charge relay system residues histidine 165 and glutamate 167.

The protein belongs to the glutaminase PdxT/SNO family. In terms of assembly, in the presence of PdxS, forms a dodecamer of heterodimers. Only shows activity in the heterodimer.

The catalysed reaction is aldehydo-D-ribose 5-phosphate + D-glyceraldehyde 3-phosphate + L-glutamine = pyridoxal 5'-phosphate + L-glutamate + phosphate + 3 H2O + H(+). It catalyses the reaction L-glutamine + H2O = L-glutamate + NH4(+). It participates in cofactor biosynthesis; pyridoxal 5'-phosphate biosynthesis. Functionally, catalyzes the hydrolysis of glutamine to glutamate and ammonia as part of the biosynthesis of pyridoxal 5'-phosphate. The resulting ammonia molecule is channeled to the active site of PdxS. This is Pyridoxal 5'-phosphate synthase subunit PdxT from Staphylococcus haemolyticus (strain JCSC1435).